Here is a 517-residue protein sequence, read N- to C-terminus: 2-isopropylmalate synthase (517 aa).

Positions 6–267 constitute a Pyruvate carboxyltransferase domain; sequence IIVFDTTLRD…YTTINTPEIY (262 aa). Asp-15, His-201, His-203, and Asn-237 together coordinate Mn(2+). Residues 393–517 form a regulatory domain region; sequence DLIGLQISDC…RLSKSSEHQV (125 aa).

Belongs to the alpha-IPM synthase/homocitrate synthase family. LeuA type 1 subfamily. In terms of assembly, homodimer. Mn(2+) is required as a cofactor.

The protein resides in the cytoplasm. The enzyme catalyses 3-methyl-2-oxobutanoate + acetyl-CoA + H2O = (2S)-2-isopropylmalate + CoA + H(+). The protein operates within amino-acid biosynthesis; L-leucine biosynthesis; L-leucine from 3-methyl-2-oxobutanoate: step 1/4. Functionally, catalyzes the condensation of the acetyl group of acetyl-CoA with 3-methyl-2-oxobutanoate (2-ketoisovalerate) to form 3-carboxy-3-hydroxy-4-methylpentanoate (2-isopropylmalate). The chain is 2-isopropylmalate synthase from Aliarcobacter butzleri (strain RM4018) (Arcobacter butzleri).